Reading from the N-terminus, the 432-residue chain is Small ribosomal subunit protein uS5m (432 aa).

Residues 110 to 130 (AGARKGRGKRTKKKKRKDLNR) are disordered. Basic residues predominate over residues 113–127 (RKGRGKRTKKKKRKD). Residues 220-284 (FDTRILEVRN…NRAIHYLHYI (65 aa)) enclose the S5 DRBM domain.

The protein belongs to the universal ribosomal protein uS5 family. In terms of assembly, component of the mitochondrial ribosome small subunit (28S) which comprises a 12S rRNA and about 30 distinct proteins.

Its subcellular location is the mitochondrion. This Mus musculus (Mouse) protein is Small ribosomal subunit protein uS5m (Mrps5).